We begin with the raw amino-acid sequence, 338 residues long: Ketol-acid reductoisomerase (NADP(+)) (338 aa).

The 181-residue stretch at 1–181 folds into the KARI N-terminal Rossmann domain; the sequence is MQVYYDKDCD…GGGRTGIIET (181 aa). Residues 24-27, R47, S50, S52, and 82-85 each bind NADP(+); these read YGSQ and DEFQ. Residue H107 is part of the active site. G133 contributes to the NADP(+) binding site. In terms of domain architecture, KARI C-terminal knotted spans 182-327; sequence TFKDETETDL…EKLRGMMPWI (146 aa). Mg(2+) contacts are provided by D190, E194, E226, and E230. A substrate-binding site is contributed by S251.

The protein belongs to the ketol-acid reductoisomerase family. Mg(2+) serves as cofactor.

The enzyme catalyses (2R)-2,3-dihydroxy-3-methylbutanoate + NADP(+) = (2S)-2-acetolactate + NADPH + H(+). It catalyses the reaction (2R,3R)-2,3-dihydroxy-3-methylpentanoate + NADP(+) = (S)-2-ethyl-2-hydroxy-3-oxobutanoate + NADPH + H(+). It participates in amino-acid biosynthesis; L-isoleucine biosynthesis; L-isoleucine from 2-oxobutanoate: step 2/4. The protein operates within amino-acid biosynthesis; L-valine biosynthesis; L-valine from pyruvate: step 2/4. Functionally, involved in the biosynthesis of branched-chain amino acids (BCAA). Catalyzes an alkyl-migration followed by a ketol-acid reduction of (S)-2-acetolactate (S2AL) to yield (R)-2,3-dihydroxy-isovalerate. In the isomerase reaction, S2AL is rearranged via a Mg-dependent methyl migration to produce 3-hydroxy-3-methyl-2-ketobutyrate (HMKB). In the reductase reaction, this 2-ketoacid undergoes a metal-dependent reduction by NADPH to yield (R)-2,3-dihydroxy-isovalerate. The sequence is that of Ketol-acid reductoisomerase (NADP(+)) from Alcanivorax borkumensis (strain ATCC 700651 / DSM 11573 / NCIMB 13689 / SK2).